Here is a 252-residue protein sequence, read N- to C-terminus: MEMKQISETTLKITISMDDLEERGMELKDFLIPQEKTEEFFYTVMDELDLPDNFKDSGMLSFRVTPRKDRLDVFVTKSDLNKEINFDDLADLGDVSQMTPEDFFKTIEKSMIEKGDVNAHEKLEKIEEMMEEAVDAVMTQNAEEQKEEESPFEPLDYVHYVLDFMTIQDAITFSKTVTFPIEASELYKSSDRYHMTILLDIQNQPSYYANVMYARLIEHALPGSKTRAYLQEHAHQLLEDHAVTELQKVELV.

This sequence belongs to the MecA family. As to quaternary structure, homodimer.

Its function is as follows. Enables the recognition and targeting of unfolded and aggregated proteins to the ClpC protease or to other proteins involved in proteolysis. The polypeptide is Adapter protein MecA (Streptococcus uberis (strain ATCC BAA-854 / 0140J)).